The following is a 372-amino-acid chain: MEAQNIFLYLLIVFLSLHFVFTTLKGRLSPANTRRLIRLLHIPIKSPVAAAIFARKDTREFLDSSIKLVNEEDDFGFSFDFKPYMISKAETINRALDEAIPLIEPLNIHKAMRYAILAGGKRVRPILCLAACELVGGEERLAIQAACAVEMIHTMSLIKDDLPCMDNDDLRRGKPTTHKVFGESVAILSGGALLALAFEHLTEADVSSKKMVRAVKELAKSIGTKGLVAGQAKDLSSEGLEQNDVGLEDLEYIHVHKTGSLLEASAVIGAVIGGGTEKEIEKVRNFARCIGLLFQVVDDILDETKSSEELGKTAGKDKVAGKLTYPKVIGVEKSKEFVEKLKRDAREHLQGFDSDKVKPLIALTNFIANRNH.

The signal sequence occupies residues 1–22 (MEAQNIFLYLLIVFLSLHFVFT). Positions 121, 124, and 153 each coordinate isopentenyl diphosphate. The Mg(2+) site is built by D160 and D166. R171 lines the dimethylallyl diphosphate pocket. R172 lines the isopentenyl diphosphate pocket. The dimethylallyl diphosphate site is built by K257, T258, Q295, K312, and K322.

It belongs to the FPP/GGPP synthase family. As to quaternary structure, monomer. Mg(2+) is required as a cofactor. Faintly expressed in flowers. Expressed in roots and siliques.

It localises to the endoplasmic reticulum. It catalyses the reaction isopentenyl diphosphate + dimethylallyl diphosphate = (2E)-geranyl diphosphate + diphosphate. The enzyme catalyses isopentenyl diphosphate + (2E)-geranyl diphosphate = (2E,6E)-farnesyl diphosphate + diphosphate. The catalysed reaction is isopentenyl diphosphate + (2E,6E)-farnesyl diphosphate = (2E,6E,10E)-geranylgeranyl diphosphate + diphosphate. The protein operates within isoprenoid biosynthesis; farnesyl diphosphate biosynthesis; farnesyl diphosphate from geranyl diphosphate and isopentenyl diphosphate: step 1/1. It functions in the pathway isoprenoid biosynthesis; geranyl diphosphate biosynthesis; geranyl diphosphate from dimethylallyl diphosphate and isopentenyl diphosphate: step 1/1. Its pathway is isoprenoid biosynthesis; geranylgeranyl diphosphate biosynthesis; geranylgeranyl diphosphate from farnesyl diphosphate and isopentenyl diphosphate: step 1/1. Catalyzes the trans-addition of the three molecules of isopentenyl diphosphate (IPP) onto dimethylallyl diphosphate (DMAPP) to form geranylgeranyl diphosphate. The sequence is that of Geranylgeranyl pyrophosphate synthase 4 from Arabidopsis thaliana (Mouse-ear cress).